The sequence spans 293 residues: Transcription initiation factor IIB 2 (293 aa).

The segment at 1-31 adopts a TFIIB-type zinc-finger fold; sequence MKCPYCKTDNAITYDVEKGMYVCTNCASVIE. 4 residues coordinate Zn(2+): Cys3, Cys6, Cys23, and Cys26. Repeat copies occupy residues 107–193 and 204–285.

Belongs to the TFIIB family.

Stabilizes TBP binding to an archaeal box-A promoter. Also responsible for recruiting RNA polymerase II to the pre-initiation complex (DNA-TBP-TFIIB). The sequence is that of Transcription initiation factor IIB 2 from Saccharolobus solfataricus (strain ATCC 35092 / DSM 1617 / JCM 11322 / P2) (Sulfolobus solfataricus).